The chain runs to 413 residues: MAP kinase-interacting serine/threonine-protein kinase 1 (413 aa).

The disordered stretch occupies residues 1-26 (MGSSEPLPIVDSDKRRKKKRKTRATD). Position 22 is a phosphothreonine; by PAK2 (Thr22). Position 27 is a phosphoserine; by PAK2 (Ser27). Positions 37 to 321 (QLTSELLGEG…AAQVLQHPWV (285 aa)) constitute a Protein kinase domain. ATP contacts are provided by residues 43–51 (LGEGAYAKV) and Lys66. Residue Asp158 is the Proton acceptor of the active site. Phosphoserine occurs at positions 168 and 173. Phosphothreonine occurs at positions 197, 202, and 332.

The protein belongs to the protein kinase superfamily. CAMK Ser/Thr protein kinase family. As to quaternary structure, interacts with the C-terminal regions of EIF4G1 and EIF4G2. Also binds to dephosphorylated ERK1 and ERK2, and to the p38 kinases. The cofactor is Mg(2+). In terms of processing, dual phosphorylation of Thr-197 and Thr-202 activates the kinase. Phosphorylation of Thr-332 activates the kinase. MAPK3/ERK1 is one of the kinases which activate MKNK1/MNK1. Phosphorylation by PAK2 leads to a reduced phosphorylation of EIF4G1.

It catalyses the reaction L-seryl-[protein] + ATP = O-phospho-L-seryl-[protein] + ADP + H(+). The enzyme catalyses L-threonyl-[protein] + ATP = O-phospho-L-threonyl-[protein] + ADP + H(+). With respect to regulation, phosphorylated and activated by the p38 kinases and kinases in the Erk pathway. May play a role in the response to environmental stress and cytokines. Appears to regulate translation by phosphorylating EIF4E, thus increasing the affinity of this protein for the 7-methylguanosine-containing mRNA cap. The sequence is that of MAP kinase-interacting serine/threonine-protein kinase 1 (Mknk1) from Rattus norvegicus (Rat).